The chain runs to 216 residues: Probable nicotinate-nucleotide adenylyltransferase (216 aa).

This sequence belongs to the NadD family.

It catalyses the reaction nicotinate beta-D-ribonucleotide + ATP + H(+) = deamido-NAD(+) + diphosphate. It participates in cofactor biosynthesis; NAD(+) biosynthesis; deamido-NAD(+) from nicotinate D-ribonucleotide: step 1/1. Its function is as follows. Catalyzes the reversible adenylation of nicotinate mononucleotide (NaMN) to nicotinic acid adenine dinucleotide (NaAD). This chain is Probable nicotinate-nucleotide adenylyltransferase, found in Shewanella baltica (strain OS223).